Reading from the N-terminus, the 570-residue chain is Arginine--tRNA ligase (570 aa).

Positions 127 to 137 match the 'HIGH' region motif; it reads ANPTGPLHLGH.

Belongs to the class-I aminoacyl-tRNA synthetase family. In terms of assembly, monomer.

The protein localises to the cytoplasm. It carries out the reaction tRNA(Arg) + L-arginine + ATP = L-arginyl-tRNA(Arg) + AMP + diphosphate. This chain is Arginine--tRNA ligase, found in Neorickettsia sennetsu (strain ATCC VR-367 / Miyayama) (Ehrlichia sennetsu).